Here is a 74-residue protein sequence, read N- to C-terminus: Pelophylaxin-2 (74 aa).

Positions 1–22 are cleaved as a signal peptide; it reads MFTMKKSLLFFFFLGTIALSLC. A propeptide spanning residues 23 to 42 is cleaved from the precursor; it reads EEERGADEEENGAEITDEEV. Cys-68 and Cys-74 are disulfide-bonded.

In terms of tissue distribution, expressed by the skin glands.

The protein resides in the secreted. Antimicrobial peptide. In Pelophylax fukienensis (Fukien gold-striped pond frog), this protein is Pelophylaxin-2.